Consider the following 118-residue polypeptide: Large ribosomal subunit protein uL24 (118 aa).

This sequence belongs to the universal ribosomal protein uL24 family. As to quaternary structure, part of the 50S ribosomal subunit.

One of two assembly initiator proteins, it binds directly to the 5'-end of the 23S rRNA, where it nucleates assembly of the 50S subunit. Functionally, one of the proteins that surrounds the polypeptide exit tunnel on the outside of the subunit. This is Large ribosomal subunit protein uL24 from Prochlorococcus marinus (strain NATL2A).